We begin with the raw amino-acid sequence, 612 residues long: Elongation factor 4 (612 aa).

In terms of domain architecture, tr-type G spans 11 to 193 (NHIRNFSIVA…KIVTDIPAPS (183 aa)). GTP is bound by residues 23-28 (DHGKST) and 140-143 (NKID).

The protein belongs to the TRAFAC class translation factor GTPase superfamily. Classic translation factor GTPase family. LepA subfamily.

The protein resides in the cell membrane. It carries out the reaction GTP + H2O = GDP + phosphate + H(+). Its function is as follows. Required for accurate and efficient protein synthesis under certain stress conditions. May act as a fidelity factor of the translation reaction, by catalyzing a one-codon backward translocation of tRNAs on improperly translocated ribosomes. Back-translocation proceeds from a post-translocation (POST) complex to a pre-translocation (PRE) complex, thus giving elongation factor G a second chance to translocate the tRNAs correctly. Binds to ribosomes in a GTP-dependent manner. In Lactobacillus acidophilus (strain ATCC 700396 / NCK56 / N2 / NCFM), this protein is Elongation factor 4.